Reading from the N-terminus, the 234-residue chain is Purine nucleoside phosphorylase DeoD-type (234 aa).

His-5 lines the a purine D-ribonucleoside pocket. Phosphate contacts are provided by residues Gly-21, Arg-25, Arg-44, and 88 to 91; that span reads RIGS. Residues 180-182 and 204-205 contribute to the a purine D-ribonucleoside site; these read EME and SD. Residue Asp-205 is the Proton donor of the active site.

This sequence belongs to the PNP/UDP phosphorylase family. In terms of assembly, homohexamer; trimer of homodimers.

The enzyme catalyses a purine D-ribonucleoside + phosphate = a purine nucleobase + alpha-D-ribose 1-phosphate. It carries out the reaction a purine 2'-deoxy-D-ribonucleoside + phosphate = a purine nucleobase + 2-deoxy-alpha-D-ribose 1-phosphate. Functionally, catalyzes the reversible phosphorolytic breakdown of the N-glycosidic bond in the beta-(deoxy)ribonucleoside molecules, with the formation of the corresponding free purine bases and pentose-1-phosphate. This chain is Purine nucleoside phosphorylase DeoD-type, found in Colwellia psychrerythraea (strain 34H / ATCC BAA-681) (Vibrio psychroerythus).